The following is a 306-amino-acid chain: Aspartate carbamoyltransferase catalytic subunit (306 aa).

Carbamoyl phosphate contacts are provided by arginine 54 and threonine 55. Lysine 83 serves as a coordination point for L-aspartate. Positions 104, 132, and 135 each coordinate carbamoyl phosphate. L-aspartate is bound by residues arginine 165 and arginine 227. Leucine 266 and proline 267 together coordinate carbamoyl phosphate.

It belongs to the aspartate/ornithine carbamoyltransferase superfamily. ATCase family. As to quaternary structure, heterododecamer (2C3:3R2) of six catalytic PyrB chains organized as two trimers (C3), and six regulatory PyrI chains organized as three dimers (R2).

It catalyses the reaction carbamoyl phosphate + L-aspartate = N-carbamoyl-L-aspartate + phosphate + H(+). Its pathway is pyrimidine metabolism; UMP biosynthesis via de novo pathway; (S)-dihydroorotate from bicarbonate: step 2/3. Catalyzes the condensation of carbamoyl phosphate and aspartate to form carbamoyl aspartate and inorganic phosphate, the committed step in the de novo pyrimidine nucleotide biosynthesis pathway. The polypeptide is Aspartate carbamoyltransferase catalytic subunit (Finegoldia magna (strain ATCC 29328 / DSM 20472 / WAL 2508) (Peptostreptococcus magnus)).